Consider the following 265-residue polypeptide: Thiazole synthase (265 aa).

Catalysis depends on K106, which acts as the Schiff-base intermediate with DXP. 1-deoxy-D-xylulose 5-phosphate-binding positions include G167, 193–194 (AG), and 215–216 (NS).

It belongs to the ThiG family. As to quaternary structure, homotetramer. Forms heterodimers with either ThiH or ThiS.

The protein localises to the cytoplasm. The enzyme catalyses [ThiS sulfur-carrier protein]-C-terminal-Gly-aminoethanethioate + 2-iminoacetate + 1-deoxy-D-xylulose 5-phosphate = [ThiS sulfur-carrier protein]-C-terminal Gly-Gly + 2-[(2R,5Z)-2-carboxy-4-methylthiazol-5(2H)-ylidene]ethyl phosphate + 2 H2O + H(+). The protein operates within cofactor biosynthesis; thiamine diphosphate biosynthesis. Functionally, catalyzes the rearrangement of 1-deoxy-D-xylulose 5-phosphate (DXP) to produce the thiazole phosphate moiety of thiamine. Sulfur is provided by the thiocarboxylate moiety of the carrier protein ThiS. In vitro, sulfur can be provided by H(2)S. The chain is Thiazole synthase from Prochlorococcus marinus subsp. pastoris (strain CCMP1986 / NIES-2087 / MED4).